A 161-amino-acid chain; its full sequence is Nuclear transcription factor Y subunit B-3 (161 aa).

Positions 1-23 (MADSDNDSGGHKDGGNASTREQD) are disordered. N-acetylalanine is present on A2. The span at 8 to 23 (SGGHKDGGNASTREQD) shows a compositional bias: basic and acidic residues. The DNA-binding element occupies 26-32 (LPIANVS). The segment at 53–64 (VQECVSEFISFI) is subunit association domain (SAD). Residues 114-146 (EKTTTAGRQGDKEGGGGGGGAGSGSGGAPMYGG) form a disordered region. The segment covering 128–146 (GGGGGGAGSGSGGAPMYGG) has biased composition (gly residues).

The protein belongs to the NFYB/HAP3 subunit family. As to quaternary structure, heterotrimeric transcription factor composed of three components, NF-YA, NF-YB and NF-YC. NF-YB and NF-YC must interact and dimerize for NF-YA association and DNA binding. Component of a heat stress-inducible transcriptional complex with NF-YA and NF-YB subunits made, at least, of NFYA2, NFYB3 and DPB3-1 in cooperation with DREB2A. Binds directly with DPB3-1. In terms of tissue distribution, ubiquitous. Expressed in seedlings, petioles, hypocotyls, reproductive organ tissues and leaves.

The protein localises to the nucleus. It is found in the cytoplasm. Its subcellular location is the cytosol. In terms of biological role, component of the NF-Y/HAP transcription factor complex. The NF-Y complex stimulates the transcription of various genes by recognizing and binding to a CCAAT motif in promoters. Promotes the expression of heat stress-inducible genes by contributing to the formation of a heat stress-specific transcriptional complex with NF-Y subunits (e.g. DPB3-1, NF-YA2 and NF-YB3) and DREB2A at the promoter of target genes, thus promoting heat tolerance. The polypeptide is Nuclear transcription factor Y subunit B-3 (Arabidopsis thaliana (Mouse-ear cress)).